The following is a 152-amino-acid chain: Large ribosomal subunit protein uL15 (152 aa).

Residues 1-12 (MTSTLNTLKSNT) show a composition bias toward polar residues. The interval 1–57 (MTSTLNTLKSNTGSRKKKLRKGRGIAAGQGASCGFGMRGQKSRSGRPTRPGFEGGQM) is disordered. Residues 14 to 23 (SRKKKLRKGR) are compositionally biased toward basic residues. A compositionally biased stretch (gly residues) spans 25 to 37 (IAAGQGASCGFGM).

The protein belongs to the universal ribosomal protein uL15 family. As to quaternary structure, part of the 50S ribosomal subunit.

In terms of biological role, binds to the 23S rRNA. The polypeptide is Large ribosomal subunit protein uL15 (Prochlorococcus marinus subsp. pastoris (strain CCMP1986 / NIES-2087 / MED4)).